We begin with the raw amino-acid sequence, 88 residues long: MHVHKGLIFLSFFSPIYLSLLLNGSIFFFYYAQRALHDSFFFPNELLRCQICLCSLFWMVTVINLKRFFARMVNISIYQPSRNRLVRY.

2 consecutive transmembrane segments (helical) span residues 8 to 28 and 45 to 65; these read IFLS…SIFF and ELLR…VINL.

The protein localises to the membrane. This is an uncharacterized protein from Saccharomyces cerevisiae (strain ATCC 204508 / S288c) (Baker's yeast).